A 371-amino-acid polypeptide reads, in one-letter code: Putative RNA-binding protein Luc7-like 1 (371 aa).

2 coiled-coil regions span residues 87–177 (MDHL…RNSM) and 218–259 (FIQI…LSRR). The segment covering 232-257 (VAEKQEKRNQDRLRRREEREREERLS) has biased composition (basic and acidic residues). The tract at residues 232–371 (VAEKQEKRNQ…RSEEKEAGEI (140 aa)) is disordered. A compositionally biased stretch (basic residues) spans 258–317 (RRSGSRTRDRRRSRSRDRRRRRSRSTSRERRKLSRSRSRDRHRRHRSRSRSHSRGHRRAS). Composition is skewed to basic and acidic residues over residues 318 to 351 (RDRSAKYKFSRERASREESWESGRSERGPPDWRL) and 361 to 371 (RRSEEKEAGEI). Residues serine 332, serine 336, and serine 363 each carry the phosphoserine modification.

The protein belongs to the Luc7 family. In terms of tissue distribution, ubiquitous.

Its function is as follows. May bind to RNA via its Arg/Ser-rich domain. This Homo sapiens (Human) protein is Putative RNA-binding protein Luc7-like 1 (LUC7L).